Reading from the N-terminus, the 368-residue chain is C6 finger domain transcription factor tcpZ (368 aa).

Residues 30-56 constitute a DNA-binding region (zn(2)-C6 fungal-type); the sequence is CDACHASKVRCSGEPICARCQRDNVAC. The segment at 84–109 is disordered; that stretch reads FIEQRQRPAASQPPGHGTSRDSSVCA.

Its subcellular location is the nucleus. In terms of biological role, transcription factor that specifically regulates the thioclapurine biosynthesis gene cluster. This is C6 finger domain transcription factor tcpZ from Claviceps purpurea (strain 20.1) (Ergot fungus).